The chain runs to 48 residues: Large ribosomal subunit protein bL33A (48 aa).

It belongs to the bacterial ribosomal protein bL33 family.

The chain is Large ribosomal subunit protein bL33A from Exiguobacterium sibiricum (strain DSM 17290 / CCUG 55495 / CIP 109462 / JCM 13490 / 255-15).